The primary structure comprises 264 residues: Ribosomal protein L11 methyltransferase (264 aa).

Residues T116, G137, D159, and N200 each contribute to the S-adenosyl-L-methionine site.

The protein belongs to the methyltransferase superfamily. PrmA family.

Its subcellular location is the cytoplasm. It catalyses the reaction L-lysyl-[protein] + 3 S-adenosyl-L-methionine = N(6),N(6),N(6)-trimethyl-L-lysyl-[protein] + 3 S-adenosyl-L-homocysteine + 3 H(+). Its function is as follows. Methylates ribosomal protein L11. In Thermotoga maritima (strain ATCC 43589 / DSM 3109 / JCM 10099 / NBRC 100826 / MSB8), this protein is Ribosomal protein L11 methyltransferase.